A 2335-amino-acid polypeptide reads, in one-letter code: Serine/threonine-protein kinase tor1 (2335 aa).

15 HEAT repeats span residues 1-31 (MEYF…SSTK), 164-201 (LYIS…VVCQ), 331-371 (PYLQ…AVKL), 410-449 (PIQE…AREP), 474-512 (YSLI…RDPI), 522-560 (ESVA…RHLA), 562-596 (PDNI…YNPA), 642-679 (PYIQ…VEGE), 684-722 (DVRG…RSGY), 728-766 (LDYP…LDPY), 843-880 (VFLP…IIGP), 904-923 (LLVI…DEFK), 924-961 (FYLP…FGSN), 964-1003 (EYMH…SVNF), and 1005-1042 (DHAS…QLGY). Residues 1226 to 1781 (VISAHASKCN…VYSLTVSSKS (556 aa)) enclose the FAT domain. The PI3K/PI4K catalytic domain maps to 1955-2269 (FHHTFEVISS…ARHADYAALS (315 aa)). The G-loop stretch occupies residues 1961–1967 (VISSKQR). Threonine 1972 carries the phosphothreonine; by PKB/AKT1 modification. The tract at residues 2134–2142 (GLGDRHPSN) is catalytic loop. An activation loop region spans residues 2154 to 2179 (HIDFGDCFEVAMHREKFPEKIPFRLT). One can recognise an FATC domain in the interval 2303 to 2335 (EQLPVKAQVEKLIQQATAPENLCRCYVGWCSFW).

This sequence belongs to the PI3/PI4-kinase family. The target of rapamycin complex 2 (TORC2) is composed of at least bit61, pop3/wat1, sin1, ste20 and tor1. Post-translationally, phosphorylation at Thr-1972 in the ATP-binding region by AKT1 strongly reduces kinase activity.

The protein resides in the cytoplasm. The enzyme catalyses L-seryl-[protein] + ATP = O-phospho-L-seryl-[protein] + ADP + H(+). It catalyses the reaction L-threonyl-[protein] + ATP = O-phospho-L-threonyl-[protein] + ADP + H(+). Functionally, catalytic component of TORC2, which regulates multiple cellular processes to control cell growth in response to environmental signals. In response to signals, TORC2 phosphorylates AGC protein kinase family members. TORC2 is required for cell survival under various stress conditions. TORC2 positively controls G1 cell-cycle arrest, sexual development and amino acid uptake. Positively regulates amino acid uptake through the control of expression of amino acid permeases. Responsible for the phosphorylation of AGC kinase gad8 at 'Ser-527' and 'Ser-546', activating gad8 kinase activity and promoting sexual development. The sequence is that of Serine/threonine-protein kinase tor1 from Schizosaccharomyces pombe (strain 972 / ATCC 24843) (Fission yeast).